A 992-amino-acid chain; its full sequence is Tubulin glycylase 3A (992 aa).

2 disordered regions span residues 1-54 (MQTR…NRVV) and 68-113 (QSDS…LGAP). The segment covering 7 to 26 (SEPHRSRDQVTDGDRNRDQP) has biased composition (basic and acidic residues). The span at 39-49 (VTPPAAPPPTP) shows a compositional bias: pro residues. In terms of domain architecture, TTL spans 295 to 645 (FKLTACVAFL…RRTDPKAELG (351 aa)). ATP-binding positions include 457 to 460 (QKYI), Lys470, and Asp472. Disordered stretches follow at residues 746 to 766 (SLCSQLPQKSPSAAPALTATP) and 791 to 828 (KRNTGGSLSGEQVQSTALPPKRQRSCGPRLSSTNPVES). Over residues 794–807 (TGGSLSGEQVQSTA) the composition is skewed to polar residues.

It is found in the cytoplasm. Its subcellular location is the cytoskeleton. Polylycylase which modifies alpha- and beta-tubulin, generating side chains of glycine on the gamma-carboxyl groups of specific glutamate residues within the C-terminal tail of alpha- and beta-tubulin. Involved both in the side-chain initiation and elongation steps of the polyglycylation reaction by adding a single glycine chain to generate monoglycine side chains and by elongating monoglycine side chains to polyglycine side chains. The polypeptide is Tubulin glycylase 3A (TTLL3A) (Drosophila melanogaster (Fruit fly)).